Consider the following 695-residue polypeptide: GRB2-associated-binding protein 1 (695 aa).

Ser-2 carries the post-translational modification N-acetylserine. The PH domain occupies 5 to 116 (EVVCSGWLRK…WVRCICDICG (112 aa)). The tract at residues 204 to 229 (AKPTFSETDCNDNVPSHQTPASSQSK) is disordered. The segment covering 206-229 (PTFSETDCNDNVPSHQTPASSQSK) has biased composition (polar residues). 4 positions are modified to phosphoserine: Ser-251, Ser-253, Ser-266, and Ser-304. The tract at residues 306–387 (SYDIPPTPGN…PAGMTPSRSN (82 aa)) is disordered. Over residues 314-334 (GNTYQIPRTFPESTLGQSSKL) the composition is skewed to polar residues. The residue at position 388 (Thr-388) is a Phosphothreonine. Phosphoserine occurs at positions 403 and 455. The interval 453–659 (PNSPPRQHSG…GSSMADERVD (207 aa)) is disordered. 2 stretches are compositionally biased toward polar residues: residues 457–466 (PRQHSGSFTE) and 605–617 (FASNSLDGGSSPM). Residue Tyr-628 is modified to Phosphotyrosine. Thr-639 is modified (phosphothreonine). Ser-652 is modified (phosphoserine). Phosphotyrosine is present on Tyr-660. The tract at residues 671-695 (LKSTREAWTDGRQSTESETPTKNVK) is disordered. Over residues 673 to 685 (STREAWTDGRQST) the composition is skewed to basic and acidic residues. Ser-684 carries the post-translational modification Phosphoserine. The segment covering 686–695 (ESETPTKNVK) has biased composition (polar residues).

It belongs to the GAB family. As to quaternary structure, identified in a complex containing FRS2, GRB2, GAB1, PIK3R1 and SOS1. Forms a tripartite complex containing GAB1, METTL13 and SPRY2. Within the complex interacts with METTL13. Interacts with GRB2 and with other SH2-containing proteins. Interacts with phosphorylated LAT2. Interacts with PTPRJ. Interacts (phosphorylated) with PTPN11. Interacts with HCK. Phosphorylated on tyrosine residue(s) by the epidermal growth factor receptor (EGFR) and the insulin receptor (INSR). Tyrosine phosphorylation of GAB1 mediates interaction with several proteins that contain SH2 domains. Phosphorylated on tyrosine residues by HCK upon IL6 signaling. Phosphorylated in response to FGFR1 activation. Expressed in the inner ear (at protein level). Expression is detected in the cochlear duct, spiral limbus region, efferent and afferent nerves, and in spiral ganglion neurons (at protein level).

In terms of biological role, adapter protein that plays a role in intracellular signaling cascades triggered by activated receptor-type kinases. Plays a role in FGFR1 signaling. Probably involved in signaling by the epidermal growth factor receptor (EGFR) and the insulin receptor (INSR). Involved in the MET/HGF-signaling pathway. The polypeptide is GRB2-associated-binding protein 1 (Gab1) (Mus musculus (Mouse)).